The primary structure comprises 126 residues: Fatty acid-binding protein, liver (126 aa).

Cholate is bound by residues 54 to 56 (TPN), 99 to 101 (HEQ), and arginine 121.

The protein belongs to the calycin superfamily. Fatty-acid binding protein (FABP) family.

The protein localises to the cytoplasm. Its function is as follows. FABPs are thought to play a role in the intracellular transport of long-chain fatty acids and their acyl-CoA esters. The polypeptide is Fatty acid-binding protein, liver (Anolis pulchellus (Common grass anole)).